The primary structure comprises 342 residues: Farnesyl pyrophosphate synthase 2 (342 aa).

Lysine 47, arginine 50, and glutamine 86 together coordinate isopentenyl diphosphate. The Mg(2+) site is built by aspartate 93 and aspartate 97. Arginine 102 contributes to the dimethylallyl diphosphate binding site. Isopentenyl diphosphate is bound at residue arginine 103. 5 residues coordinate dimethylallyl diphosphate: lysine 190, threonine 191, glutamine 229, lysine 246, and lysine 255.

The protein belongs to the FPP/GGPP synthase family. Mg(2+) serves as cofactor.

Its subcellular location is the cytoplasm. It carries out the reaction isopentenyl diphosphate + dimethylallyl diphosphate = (2E)-geranyl diphosphate + diphosphate. The catalysed reaction is isopentenyl diphosphate + (2E)-geranyl diphosphate = (2E,6E)-farnesyl diphosphate + diphosphate. Its pathway is isoprenoid biosynthesis; farnesyl diphosphate biosynthesis; farnesyl diphosphate from geranyl diphosphate and isopentenyl diphosphate: step 1/1. The protein operates within isoprenoid biosynthesis; geranyl diphosphate biosynthesis; geranyl diphosphate from dimethylallyl diphosphate and isopentenyl diphosphate: step 1/1. Its function is as follows. Catalyzes the sequential condensation of isopentenyl pyrophosphate with the allylic pyrophosphates, dimethylallyl pyrophosphate, and then with the resultant geranylpyrophosphate to the ultimate product farnesyl pyrophosphate. The chain is Farnesyl pyrophosphate synthase 2 (FPS2) from Arabidopsis thaliana (Mouse-ear cress).